A 75-amino-acid chain; its full sequence is Exodeoxyribonuclease 7 small subunit (75 aa).

Belongs to the XseB family. In terms of assembly, heterooligomer composed of large and small subunits.

It is found in the cytoplasm. The catalysed reaction is Exonucleolytic cleavage in either 5'- to 3'- or 3'- to 5'-direction to yield nucleoside 5'-phosphates.. In terms of biological role, bidirectionally degrades single-stranded DNA into large acid-insoluble oligonucleotides, which are then degraded further into small acid-soluble oligonucleotides. The chain is Exodeoxyribonuclease 7 small subunit from Chlamydia felis (strain Fe/C-56) (Chlamydophila felis).